The sequence spans 106 residues: Nucleoid-associated protein BBta_7345 (106 aa).

This sequence belongs to the YbaB/EbfC family. As to quaternary structure, homodimer.

The protein resides in the cytoplasm. It localises to the nucleoid. Its function is as follows. Binds to DNA and alters its conformation. May be involved in regulation of gene expression, nucleoid organization and DNA protection. This chain is Nucleoid-associated protein BBta_7345, found in Bradyrhizobium sp. (strain BTAi1 / ATCC BAA-1182).